The chain runs to 1085 residues: Carbamoyl phosphate synthase large chain (1085 aa).

The carboxyphosphate synthetic domain stretch occupies residues 1 to 399; it reads MPKRTDISNI…ALQKALCSLE (399 aa). ATP-binding residues include arginine 127, arginine 167, glycine 174, glutamate 206, leucine 208, glutamate 213, glycine 239, valine 240, histidine 241, glutamine 283, and glutamate 297. The 196-residue stretch at 131–326 folds into the ATP-grasp 1 domain; the sequence is KEAMLKIGMD…IAKVATMLAV (196 aa). Positions 283, 297, and 299 each coordinate Mg(2+). 3 residues coordinate Mn(2+): glutamine 283, glutamate 297, and asparagine 299. Residues 400 to 552 are oligomerization domain; it reads NNWLGFESLS…APNPLPPIEN (153 aa). The interval 553-951 is carbamoyl phosphate synthetic domain; the sequence is KQEKKEKKIL…AFFKAQTACF (399 aa). One can recognise an ATP-grasp 2 domain in the interval 678–871; that stretch reads SLFLKELDIK…LAKVATRVMV (194 aa). Positions 714, 756, 758, 763, 788, 789, 790, 791, 830, and 842 each coordinate ATP. Residues glutamine 830, glutamate 842, and asparagine 844 each contribute to the Mg(2+) site. 3 residues coordinate Mn(2+): glutamine 830, glutamate 842, and asparagine 844. Residues 952 to 1085 form the MGS-like domain; the sequence is NPIKNKGLIF…ELLALQDYLK (134 aa). Residues 952–1085 form an allosteric domain region; sequence NPIKNKGLIF…ELLALQDYLK (134 aa).

This sequence belongs to the CarB family. Composed of two chains; the small (or glutamine) chain promotes the hydrolysis of glutamine to ammonia, which is used by the large (or ammonia) chain to synthesize carbamoyl phosphate. Tetramer of heterodimers (alpha,beta)4. Mg(2+) serves as cofactor. It depends on Mn(2+) as a cofactor.

It carries out the reaction hydrogencarbonate + L-glutamine + 2 ATP + H2O = carbamoyl phosphate + L-glutamate + 2 ADP + phosphate + 2 H(+). It catalyses the reaction hydrogencarbonate + NH4(+) + 2 ATP = carbamoyl phosphate + 2 ADP + phosphate + 2 H(+). Its pathway is amino-acid biosynthesis; L-arginine biosynthesis; carbamoyl phosphate from bicarbonate: step 1/1. The protein operates within pyrimidine metabolism; UMP biosynthesis via de novo pathway; (S)-dihydroorotate from bicarbonate: step 1/3. Large subunit of the glutamine-dependent carbamoyl phosphate synthetase (CPSase). CPSase catalyzes the formation of carbamoyl phosphate from the ammonia moiety of glutamine, carbonate, and phosphate donated by ATP, constituting the first step of 2 biosynthetic pathways, one leading to arginine and/or urea and the other to pyrimidine nucleotides. The large subunit (synthetase) binds the substrates ammonia (free or transferred from glutamine from the small subunit), hydrogencarbonate and ATP and carries out an ATP-coupled ligase reaction, activating hydrogencarbonate by forming carboxy phosphate which reacts with ammonia to form carbamoyl phosphate. In Helicobacter pylori (strain ATCC 700392 / 26695) (Campylobacter pylori), this protein is Carbamoyl phosphate synthase large chain.